We begin with the raw amino-acid sequence, 349 residues long: Ion-translocating oxidoreductase complex subunit D (349 aa).

Helical transmembrane passes span 20–40, 42–62, 83–105, and 120–140; these read IMFL…YFFG, GVLI…IIIL, VLLG…CFFA, and IFNP…VHMT. Thr-184 carries the post-translational modification FMN phosphoryl threonine. Helical transmembrane passes span 212–232, 236–256, 263–283, 291–311, and 319–339; these read IVSI…CFLL, VICW…SSIT, FFCS…AFFI, SCTK…VWII, and DGIA…DAYL.

Belongs to the NqrB/RnfD family. As to quaternary structure, the complex is composed of six subunits: RnfA, RnfB, RnfC, RnfD, RnfE and RnfG. The cofactor is FMN.

It is found in the cell inner membrane. Its function is as follows. Part of a membrane-bound complex that couples electron transfer with translocation of ions across the membrane. The sequence is that of Ion-translocating oxidoreductase complex subunit D from Buchnera aphidicola subsp. Schizaphis graminum (strain Sg).